Reading from the N-terminus, the 230-residue chain is MHANWKTWAHVTKLDPDKRLPRGAVEEIATSGTDALMLSGTLNVTRENLQELLDLVSAYGLPLVVEPASPDCAIFDGGIDHLFVPSVLNTNDVRWIVGKHYAWLRQASGIDWEMVVPEAYIVLNPNSAVGRVTGADCSLSTGDVAAFAQVADRYFRFPIVYIEYSGTYGDPAIVQAASEAVENATLYYGGGIRSAEQAAEMGRYADTIVVGNAVYEEGIDVLRATVRAVQ.

K13 is a binding site for sn-glycerol 1-phosphate. D15 and T41 together coordinate Mg(2+). Residues 161 to 166 (YIEYSG), G191, and 211 to 212 (GN) contribute to the sn-glycerol 1-phosphate site.

Belongs to the GGGP/HepGP synthase family. Group I subfamily. The cofactor is Mg(2+).

The protein resides in the cytoplasm. The enzyme catalyses sn-glycerol 1-phosphate + (2E,6E,10E)-geranylgeranyl diphosphate = sn-3-O-(geranylgeranyl)glycerol 1-phosphate + diphosphate. The protein operates within membrane lipid metabolism; glycerophospholipid metabolism. Its function is as follows. Prenyltransferase that catalyzes the transfer of the geranylgeranyl moiety of geranylgeranyl diphosphate (GGPP) to the C3 hydroxyl of sn-glycerol-1-phosphate (G1P). This reaction is the first ether-bond-formation step in the biosynthesis of archaeal membrane lipids. This is Geranylgeranylglyceryl phosphate synthase from Methanoculleus marisnigri (strain ATCC 35101 / DSM 1498 / JR1).